We begin with the raw amino-acid sequence, 450 residues long: Divalent metal cation transporter MntH (450 aa).

The next 11 helical transmembrane spans lie at 44–64 (LLAF…PGNW), 77–97 (TLLS…SLAA), 121–141 (FLLW…EVIG), 152–172 (IPLI…LLLM), 181–201 (AFVI…IVAA), 218–238 (IFTN…TVMP), 273–293 (IALM…AATF), 310–330 (LLSP…ALLA), 366–386 (GIAI…GTAD), 387–407 (LLVF…IPLV), and 419–439 (FAIS…IVVL).

Belongs to the NRAMP family.

The protein resides in the cell inner membrane. Functionally, h(+)-stimulated, divalent metal cation uptake system. The protein is Divalent metal cation transporter MntH of Bradyrhizobium diazoefficiens (strain JCM 10833 / BCRC 13528 / IAM 13628 / NBRC 14792 / USDA 110).